A 267-amino-acid polypeptide reads, in one-letter code: Diphthine--ammonia ligase (267 aa).

Tyr97 carries the post-translational modification Phosphotyrosine.

The protein belongs to the Diphthine--ammonia ligase family.

It catalyses the reaction diphthine-[translation elongation factor 2] + NH4(+) + ATP = diphthamide-[translation elongation factor 2] + AMP + diphosphate + H(+). The protein operates within protein modification; peptidyl-diphthamide biosynthesis. Its function is as follows. Amidase that catalyzes the last step of diphthamide biosynthesis using ammonium and ATP. Diphthamide biosynthesis consists in the conversion of an L-histidine residue in the translation elongation factor 2 (EEF2) to diphthamide. This Mus musculus (Mouse) protein is Diphthine--ammonia ligase (Dph6).